An 86-amino-acid chain; its full sequence is UPF0180 protein CA_C1486 (86 aa).

It belongs to the UPF0180 family.

This chain is UPF0180 protein CA_C1486, found in Clostridium acetobutylicum (strain ATCC 824 / DSM 792 / JCM 1419 / IAM 19013 / LMG 5710 / NBRC 13948 / NRRL B-527 / VKM B-1787 / 2291 / W).